A 620-amino-acid chain; its full sequence is 1-deoxy-D-xylulose-5-phosphate synthase (620 aa).

Residues His-80 and Gly-121–Ser-123 each bind thiamine diphosphate. Mg(2+) is bound at residue Asp-152. Residues Gly-153–Ala-154, Asn-181, Tyr-288, and Glu-370 contribute to the thiamine diphosphate site. Asn-181 serves as a coordination point for Mg(2+).

This sequence belongs to the transketolase family. DXPS subfamily. In terms of assembly, homodimer. Requires Mg(2+) as cofactor. The cofactor is thiamine diphosphate.

The enzyme catalyses D-glyceraldehyde 3-phosphate + pyruvate + H(+) = 1-deoxy-D-xylulose 5-phosphate + CO2. It functions in the pathway metabolic intermediate biosynthesis; 1-deoxy-D-xylulose 5-phosphate biosynthesis; 1-deoxy-D-xylulose 5-phosphate from D-glyceraldehyde 3-phosphate and pyruvate: step 1/1. Functionally, catalyzes the acyloin condensation reaction between C atoms 2 and 3 of pyruvate and glyceraldehyde 3-phosphate to yield 1-deoxy-D-xylulose-5-phosphate (DXP). The polypeptide is 1-deoxy-D-xylulose-5-phosphate synthase (Salmonella heidelberg (strain SL476)).